A 364-amino-acid polypeptide reads, in one-letter code: Long-wave-sensitive opsin 1 (364 aa).

At 1–52 (MAQRWGPQKLAGGQPQAGFEDSTQASIFTYTNNNATRDPFEGPNYHIAPRWV) the chain is on the extracellular side. O-linked (GlcNAc) serine glycosylation occurs at Ser-22. Asn-34 is a glycosylation site (N-linked (GlcNAc...) asparagine). A helical membrane pass occupies residues 53–77 (YHVTSAWMIFVVIASVFTNGLVLAA). Residues 78–89 (TMRFKKLRHPLN) lie on the Cytoplasmic side of the membrane. A helical transmembrane segment spans residues 90–115 (WILVNLAVADLAETIIASTISVVNQI). Over 116–129 (YGYFVLGHPMCVVE) the chain is Extracellular. The cysteines at positions 126 and 203 are disulfide-linked. Residues 130 to 149 (GYTVSLCGITGLWSLAIISW) form a helical membrane-spanning segment. Topologically, residues 150 to 168 (ERWMVVCKPFGNVRFDAKL) are cytoplasmic. Residues 169–192 (AVAGIAFSWIWAAVWTAPPIFGWS) traverse the membrane as a helical segment. Over 193-218 (RYWPHGLKTSCGPDVFSGSSYPGVQS) the chain is Extracellular. The helical transmembrane segment at 219-246 (YMIVLMITCCIIPLSVIVLCYLQVWLAI) threads the bilayer. Topologically, residues 247-268 (RAVAKQQKESESTQKAEKEVTR) are cytoplasmic. A helical transmembrane segment spans residues 269–292 (MVMVMVFAFCLCWGPYTFFACFAA). At 293-300 (AHPGYAFH) the chain is on the extracellular side. The helical transmembrane segment at 301–325 (PLVAALPAYFAKSATIYNPIIYVFM) threads the bilayer. Lys-312 is modified (N6-(retinylidene)lysine). Residues 326 to 364 (NRQFRNCILQLFGKKVDDSSELSSVSKTEASSVSSVSPA) are Cytoplasmic-facing.

It belongs to the G-protein coupled receptor 1 family. Opsin subfamily. Phosphorylated on some or all of the serine and threonine residues present in the C-terminal region. In terms of tissue distribution, the three color pigments are found in the cone photoreceptor cells. Expressed in retina.

It localises to the membrane. Visual pigments are the light-absorbing molecules that mediate vision. They consist of an apoprotein, opsin, covalently linked to cis-retinal. This is Long-wave-sensitive opsin 1 (OPN1LW) from Equus caballus (Horse).